The sequence spans 266 residues: Inositol-1-monophosphatase (266 aa).

The Mg(2+) site is built by glutamate 69, aspartate 86, leucine 88, and aspartate 89. Position 69 (glutamate 69) interacts with substrate. Substrate contacts are provided by residues 88–91 (LDGT), arginine 185, and aspartate 214. Aspartate 214 is a binding site for Mg(2+).

This sequence belongs to the inositol monophosphatase superfamily. The cofactor is Mg(2+).

It catalyses the reaction a myo-inositol phosphate + H2O = myo-inositol + phosphate. This is Inositol-1-monophosphatase (suhB) from Mesorhizobium japonicum (strain LMG 29417 / CECT 9101 / MAFF 303099) (Mesorhizobium loti (strain MAFF 303099)).